A 400-amino-acid polypeptide reads, in one-letter code: Peroxisome biogenesis factor 16 (400 aa).

A disordered region spans residues 176–226 (QKQFQNKRPAVTMSINNNNNINNNDNNNINNNNNTNDDNFNNNNNNNNNRR). Over residues 190 to 224 (INNNNNINNNDNNNINNNNNTNDDNFNNNNNNNNN) the composition is skewed to low complexity.

It belongs to the peroxin-16 family.

It localises to the cytoplasm. Required for peroxisome membrane biogenesis. In Dictyostelium discoideum (Social amoeba), this protein is Peroxisome biogenesis factor 16 (pex16).